The primary structure comprises 444 residues: uncharacterized protein (444 aa).

The transit peptide at Met1 to Arg72 directs the protein to the chloroplast. The segment at His77–Lys107 is disordered. Polar residues predominate over residues Ser92 to Asp101. The region spanning Glu175 to Ile272 is the CRM domain. Positions Asp292–Glu355 form a coiled coil. 2 disordered regions span residues Glu344–Ser364 and Lys392–Asp426. Residues Cys346–Gly357 are compositionally biased toward acidic residues. Over residues Asp406–Asp426 the composition is skewed to basic and acidic residues.

The protein localises to the plastid. The protein resides in the chloroplast. This is an uncharacterized protein from Arabidopsis thaliana (Mouse-ear cress).